A 186-amino-acid polypeptide reads, in one-letter code: Ribosome-recycling factor (186 aa).

It belongs to the RRF family.

The protein resides in the cytoplasm. Functionally, responsible for the release of ribosomes from messenger RNA at the termination of protein biosynthesis. May increase the efficiency of translation by recycling ribosomes from one round of translation to another. The chain is Ribosome-recycling factor from Endomicrobium trichonymphae.